A 106-amino-acid polypeptide reads, in one-letter code: Urease subunit beta (106 aa).

Belongs to the urease beta subunit family. Heterotrimer of UreA (gamma), UreB (beta) and UreC (alpha) subunits. Three heterotrimers associate to form the active enzyme.

It is found in the cytoplasm. The catalysed reaction is urea + 2 H2O + H(+) = hydrogencarbonate + 2 NH4(+). The protein operates within nitrogen metabolism; urea degradation; CO(2) and NH(3) from urea (urease route): step 1/1. This chain is Urease subunit beta, found in Prochlorococcus marinus (strain NATL1A).